A 367-amino-acid polypeptide reads, in one-letter code: Alanine racemase (367 aa).

Residue lysine 40 is the Proton acceptor; specific for D-alanine of the active site. Lysine 40 bears the N6-(pyridoxal phosphate)lysine mark. Position 136 (arginine 136) interacts with substrate. The Proton acceptor; specific for L-alanine role is filled by tyrosine 263. Methionine 310 contributes to the substrate binding site.

It belongs to the alanine racemase family. It depends on pyridoxal 5'-phosphate as a cofactor.

It catalyses the reaction L-alanine = D-alanine. Its pathway is amino-acid biosynthesis; D-alanine biosynthesis; D-alanine from L-alanine: step 1/1. Its function is as follows. Catalyzes the interconversion of L-alanine and D-alanine. May also act on other amino acids. In Streptococcus thermophilus (strain ATCC BAA-250 / LMG 18311), this protein is Alanine racemase (alr).